A 170-amino-acid polypeptide reads, in one-letter code: MNLTLLATEGFGLNFNLFETNILNWAVVVFGLYKFLPGFLGKMLQKRREGILLELKDAEDRLLNATQALEKAKKDLSSAAEKASQIKADSLKRSESIRMESEKKAIEEMARIKQSAISDESSEASRAISQLRKEAVELAIKKALDSLPNRLDKTTQENLVTQSINNIEVN.

A helical membrane pass occupies residues 22-41 (ILNWAVVVFGLYKFLPGFLG). The disordered stretch occupies residues 76 to 98 (LSSAAEKASQIKADSLKRSESIR). A compositionally biased stretch (basic and acidic residues) spans 89 to 98 (DSLKRSESIR).

It belongs to the ATPase B chain family. F-type ATPases have 2 components, F(1) - the catalytic core - and F(0) - the membrane proton channel. F(1) has five subunits: alpha(3), beta(3), gamma(1), delta(1), epsilon(1). F(0) has four main subunits: a(1), b(1), b'(1) and c(10-14). The alpha and beta chains form an alternating ring which encloses part of the gamma chain. F(1) is attached to F(0) by a central stalk formed by the gamma and epsilon chains, while a peripheral stalk is formed by the delta, b and b' chains.

It is found in the cellular thylakoid membrane. Functionally, f(1)F(0) ATP synthase produces ATP from ADP in the presence of a proton or sodium gradient. F-type ATPases consist of two structural domains, F(1) containing the extramembraneous catalytic core and F(0) containing the membrane proton channel, linked together by a central stalk and a peripheral stalk. During catalysis, ATP synthesis in the catalytic domain of F(1) is coupled via a rotary mechanism of the central stalk subunits to proton translocation. Its function is as follows. Component of the F(0) channel, it forms part of the peripheral stalk, linking F(1) to F(0). In Prochlorococcus marinus (strain AS9601), this protein is ATP synthase subunit b.